The following is a 164-amino-acid chain: 3-hydroxyacyl-[acyl-carrier-protein] dehydratase FabZ (164 aa).

Histidine 61 is an active-site residue.

This sequence belongs to the thioester dehydratase family. FabZ subfamily.

Its subcellular location is the cytoplasm. It catalyses the reaction a (3R)-hydroxyacyl-[ACP] = a (2E)-enoyl-[ACP] + H2O. Its function is as follows. Involved in unsaturated fatty acids biosynthesis. Catalyzes the dehydration of short chain beta-hydroxyacyl-ACPs and long chain saturated and unsaturated beta-hydroxyacyl-ACPs. This chain is 3-hydroxyacyl-[acyl-carrier-protein] dehydratase FabZ, found in Ralstonia nicotianae (strain ATCC BAA-1114 / GMI1000) (Ralstonia solanacearum).